We begin with the raw amino-acid sequence, 271 residues long: Malonyl-[acyl-carrier protein] O-methyltransferase (271 aa).

This sequence belongs to the methyltransferase superfamily.

It catalyses the reaction malonyl-[ACP] + S-adenosyl-L-methionine = malonyl-[ACP] methyl ester + S-adenosyl-L-homocysteine. It functions in the pathway cofactor biosynthesis; biotin biosynthesis. In terms of biological role, converts the free carboxyl group of a malonyl-thioester to its methyl ester by transfer of a methyl group from S-adenosyl-L-methionine (SAM). It allows to synthesize pimeloyl-ACP via the fatty acid synthetic pathway. This Halalkalibacterium halodurans (strain ATCC BAA-125 / DSM 18197 / FERM 7344 / JCM 9153 / C-125) (Bacillus halodurans) protein is Malonyl-[acyl-carrier protein] O-methyltransferase.